We begin with the raw amino-acid sequence, 413 residues long: Alpha-1-antitrypsin-like protein GS55-LT (413 aa).

The signal sequence occupies residues 1-21 (MPSSISWGLLLLAGLSCLATG). Residues Asn65, Asn102, and Asn123 are each glycosylated (N-linked (GlcNAc...) asparagine). Positions 368–387 (RHTVKGPMALTLAPEVKFNR) are RCL.

This sequence belongs to the serpin family.

It is found in the secreted. Inhibitor of serine proteases. The sequence is that of Alpha-1-antitrypsin-like protein GS55-LT from Ictidomys tridecemlineatus (Thirteen-lined ground squirrel).